The following is a 143-amino-acid chain: Large ribosomal subunit protein uL11 (143 aa).

It belongs to the universal ribosomal protein uL11 family. As to quaternary structure, part of the ribosomal stalk of the 50S ribosomal subunit. Interacts with L10 and the large rRNA to form the base of the stalk. L10 forms an elongated spine to which L12 dimers bind in a sequential fashion forming a multimeric L10(L12)X complex. Post-translationally, one or more lysine residues are methylated.

Forms part of the ribosomal stalk which helps the ribosome interact with GTP-bound translation factors. The chain is Large ribosomal subunit protein uL11 from Burkholderia cenocepacia (strain HI2424).